Consider the following 37-residue polypeptide: Large ribosomal subunit protein bL36 (37 aa).

Belongs to the bacterial ribosomal protein bL36 family.

This is Large ribosomal subunit protein bL36 from Acidovorax ebreus (strain TPSY) (Diaphorobacter sp. (strain TPSY)).